Reading from the N-terminus, the 417-residue chain is Probable secreted aspartic protease ARB_07536 (417 aa).

Residues 1 to 20 (MRGILILVALGAATIPQASA) form the signal peptide. A Peptidase A1 domain is found at 42–413 (NTDLVTIGTP…DFEKNRVGLA (372 aa)). Residues Asn-74, Asn-91, Asn-100, Asn-170, Asn-276, and Asn-314 are each glycosylated (N-linked (GlcNAc...) asparagine). A disulfide bridge links Cys-333 with Cys-373.

The protein belongs to the peptidase A1 family.

Its subcellular location is the secreted. In terms of biological role, probable secreted aspartic protease that supplies the fungus with nutrient amino acids. May be able to degrade the selected host's proteins involved in the immune defense. The polypeptide is Probable secreted aspartic protease ARB_07536 (Arthroderma benhamiae (strain ATCC MYA-4681 / CBS 112371) (Trichophyton mentagrophytes)).